The following is a 1070-amino-acid chain: Phosphatidylinositol 4,5-bisphosphate 3-kinase catalytic subunit beta isoform (1070 aa).

In terms of domain architecture, PI3K-ABD spans 26-115 (SDGSISVDFL…LPVLKLVTRS (90 aa)). One can recognise a PI3K-RBD domain in the interval 194 to 285 (GGKLVVAVHF…RTLPHFILVE (92 aa)). At Ser324 the chain carries Phosphoserine. The C2 PI3K-type domain maps to 327-496 (WGNNNPFQIV…NATALHIKFP (170 aa)). Positions 410 to 418 (KVKTKKSTK) match the Nuclear localization signal (NLS) motif. Residues 524–701 (ANVSSRGGKK…GVILEAYCRG (178 aa)) enclose the PIK helical domain. The region spanning 772–1053 (YVEKCRYMDS…KFDEALRESW (282 aa)) is the PI3K/PI4K catalytic domain. Residues 778–784 (YMDSKMK) form a G-loop region. Residues 916-924 (GIGDRHSDN) are catalytic loop. Positions 935 to 961 (HIDFGHILGNFKSKFGIKRERVPFILT) are activation loop. Ser1070 is subject to Phosphoserine; by autocatalysis.

This sequence belongs to the PI3/PI4-kinase family. As to quaternary structure, heterodimer of a catalytic subunit PIK3CB and a p85 regulatory subunit (PIK3R1, PIK3R2 or PIK3R3). Interaction with PIK3R2 is required for nuclear localization and nuclear export. Part of a complex with PIK3R1 and PTEN. Binding to PTEN may antagonize the lipid kinase activity under normal growth conditions. Part of a complex involved in autophagosome formation composed of PIK3C3 and PIK3R4. Interacts with BECN1, ATG14 and RAB5A. Post-translationally, autophosphorylation at Ser-1070 negatively regulates the phosphatidylinositol-4,5-bisphosphate 3-kinase activity.

Its subcellular location is the cytoplasm. It is found in the nucleus. It carries out the reaction a 1,2-diacyl-sn-glycero-3-phospho-(1D-myo-inositol-4,5-bisphosphate) + ATP = a 1,2-diacyl-sn-glycero-3-phospho-(1D-myo-inositol-3,4,5-trisphosphate) + ADP + H(+). The enzyme catalyses 1-octadecanoyl-2-(5Z,8Z,11Z,14Z)-eicosatetraenoyl-sn-glycero-3-phospho-1D-myo-inositol 4,5-bisphosphate + ATP = 1-octadecanoyl-2-(5Z,8Z,11Z,14Z-eicosatetraenoyl)-sn-glycero-3-phospho-(1D-myo-inositol 3,4,5-triphosphate) + ADP + H(+). The catalysed reaction is L-seryl-[protein] + ATP = O-phospho-L-seryl-[protein] + ADP + H(+). Its pathway is phospholipid metabolism; phosphatidylinositol phosphate biosynthesis. Functionally, phosphoinositide-3-kinase (PI3K) phosphorylates phosphatidylinositol (PI) derivatives at position 3 of the inositol ring to produce 3-phosphoinositides. Uses ATP and PtdIns(4,5)P2 (phosphatidylinositol 4,5-bisphosphate) to generate phosphatidylinositol 3,4,5-trisphosphate (PIP3). PIP3 plays a key role by recruiting PH domain-containing proteins to the membrane, including AKT1 and PDPK1, activating signaling cascades involved in cell growth, survival, proliferation, motility and morphology. Involved in the activation of AKT1 upon stimulation by G-protein coupled receptors (GPCRs) ligands such as CXCL12, sphingosine 1-phosphate, and lysophosphatidic acid. May also act downstream receptor tyrosine kinases. Required in different signaling pathways for stable platelet adhesion and aggregation. Plays a role in platelet activation signaling triggered by GPCRs, alpha-IIb/beta-3 integrins (ITGA2B/ ITGB3) and ITAM (immunoreceptor tyrosine-based activation motif)-bearing receptors such as GP6. Regulates the strength of adhesion of ITGA2B/ ITGB3 activated receptors necessary for the cellular transmission of contractile forces. Required for platelet aggregation induced by F2 (thrombin) and thromboxane A2 (TXA2). Has a role in cell survival. May have a role in cell migration. Involved in the early stage of autophagosome formation. Modulates the intracellular level of PtdIns3P (phosphatidylinositol 3-phosphate) and activates PIK3C3 kinase activity. May act as a scaffold, independently of its lipid kinase activity to positively regulate autophagy. May have a role in insulin signaling as scaffolding protein in which the lipid kinase activity is not required. May have a kinase-independent function in regulating cell proliferation and in clathrin-mediated endocytosis. Mediator of oncogenic signal in cell lines lacking PTEN. The lipid kinase activity is necessary for its role in oncogenic transformation. Required for the growth of ERBB2 and RAS driven tumors. Also has a protein kinase activity showing autophosphorylation. The chain is Phosphatidylinositol 4,5-bisphosphate 3-kinase catalytic subunit beta isoform (Pik3cb) from Rattus norvegicus (Rat).